A 556-amino-acid polypeptide reads, in one-letter code: Optineurin (556 aa).

Residues 1–33 (MSSKPQIRPAENGEHCRSKMENGMDSMAPPTLS) are disordered. A compositionally biased stretch (basic and acidic residues) spans 11–22 (ENGEHCRSKMEN). Positions 38–164 (EEMVQQMKEL…SELQVKLNIA (127 aa)) form a coiled coil. The short motif at 168 to 173 (DSFVEI) is the LIR element. Positions 219 to 487 (VSQLLCCLRN…LLKEQQNLED (269 aa)) form a coiled coil. A disordered region spans residues 245-274 (ERLSKMENETSNCLESGTQTNQEEESSEAI). Polar residues predominate over residues 253–265 (ETSNCLESGTQTN). Positions 453 to 458 (DFHAER) match the UBAN motif. The disordered stretch occupies residues 496-524 (MQNRHGARAPDREHSPRLVQRGTGSQEWP). Residues 526 to 556 (QRNISIYSCPKCEEILPDLDTLQIHVMDCIN) form a CCHC NOA-type zinc finger. Residues cysteine 534, cysteine 537, histidine 550, and cysteine 554 each coordinate Zn(2+).

Binds to linear ubiquitin chains. Interacts with LC3 family members. As to expression, expressed in erythrocytes, skeletal muscle, heart, spleen and brain. Weakly expressed in lung and liver (at protein level).

The protein resides in the cytoplasm. It localises to the perinuclear region. The protein localises to the golgi apparatus. Its subcellular location is the trans-Golgi network. It is found in the cytoplasmic vesicle. The protein resides in the recycling endosome. It localises to the autophagosome. In terms of biological role, probably part of the TNF-alpha signaling pathway that can shift the equilibrium toward induction of cell death. May act by regulating membrane trafficking and cellular morphogenesis. May act as autophagy receptor that interacts directly with both the cargo to become degraded and an autophagy modifier of the MAP1 LC3 family. This Gallus gallus (Chicken) protein is Optineurin (OPTN).